Here is a 34-residue protein sequence, read N- to C-terminus: Photosystem II reaction center protein M (34 aa).

Residues Ile5–Ile25 traverse the membrane as a helical segment.

It belongs to the PsbM family. As to quaternary structure, PSII is composed of 1 copy each of membrane proteins PsbA, PsbB, PsbC, PsbD, PsbE, PsbF, PsbH, PsbI, PsbJ, PsbK, PsbL, PsbM, PsbT, PsbX, PsbY, PsbZ, Psb30/Ycf12, at least 3 peripheral proteins of the oxygen-evolving complex and a large number of cofactors. It forms dimeric complexes. Detected in both etioplasts and green leaves; PSII is only assembled in green leaves.

The protein localises to the plastid. The protein resides in the chloroplast thylakoid membrane. Its function is as follows. One of the components of the core complex of photosystem II (PSII). PSII is a light-driven water:plastoquinone oxidoreductase that uses light energy to abstract electrons from H(2)O, generating O(2) and a proton gradient subsequently used for ATP formation. It consists of a core antenna complex that captures photons, and an electron transfer chain that converts photonic excitation into a charge separation. This subunit is found at the monomer-monomer interface. This Hordeum vulgare (Barley) protein is Photosystem II reaction center protein M.